Reading from the N-terminus, the 239-residue chain is uncharacterized protein (239 aa).

The dksA C4-type; degenerate zinc finger occupies 94–114 (CEVSGKEIPFERLEALPTATT). Residues 133–158 (ETPFGQFEFDDDEEIRAPYDSEDSYQ) show a composition bias toward acidic residues. The tract at residues 133 to 182 (ETPFGQFEFDDDEEIRAPYDSEDSYQDVEKYGNSQTPQDMENPPLSYDDM) is disordered.

This is an uncharacterized protein from Bacillus subtilis (strain 168).